We begin with the raw amino-acid sequence, 186 residues long: Peptidyl-tRNA hydrolase (186 aa).

Tyrosine 14 serves as a coordination point for tRNA. The active-site Proton acceptor is histidine 19. Phenylalanine 64, asparagine 66, and asparagine 112 together coordinate tRNA.

It belongs to the PTH family. As to quaternary structure, monomer.

It is found in the cytoplasm. It catalyses the reaction an N-acyl-L-alpha-aminoacyl-tRNA + H2O = an N-acyl-L-amino acid + a tRNA + H(+). In terms of biological role, hydrolyzes ribosome-free peptidyl-tRNAs (with 1 or more amino acids incorporated), which drop off the ribosome during protein synthesis, or as a result of ribosome stalling. Catalyzes the release of premature peptidyl moieties from peptidyl-tRNA molecules trapped in stalled 50S ribosomal subunits, and thus maintains levels of free tRNAs and 50S ribosomes. The sequence is that of Peptidyl-tRNA hydrolase from Mycoplasma mycoides subsp. mycoides SC (strain CCUG 32753 / NCTC 10114 / PG1).